We begin with the raw amino-acid sequence, 635 residues long: Probable ethylene response sensor 2 (635 aa).

Transmembrane regions (helical) follow at residues 24–44 (ISDF…IYFV), 59–79 (FGAF…TFAI), and 94–114 (ATAV…PDLL). 2 residues coordinate Cu cation: cysteine 66 and histidine 70. The region spanning 159 to 308 (DRHTILRTTL…VVADQVAVAL (150 aa)) is the GAF domain. A Histidine kinase domain is found at 351 to 589 (VMNHEMRTPM…MFFVKLGMPE (239 aa)). Histidine 354 carries the post-translational modification Phosphohistidine; by autocatalysis.

Belongs to the ethylene receptor family. Homodimer. The cofactor is Cu cation.

It localises to the endoplasmic reticulum membrane. The catalysed reaction is ATP + protein L-histidine = ADP + protein N-phospho-L-histidine.. Functionally, ethylene receptor related to bacterial two-component regulators. Acts as a negative regulator of ethylene signaling. May play a role in the regulation of flowering by up-regulating GI (GIGANTEA) and RCN1 and regulate starch accumulation by down-regulating the alpha-amylase AMY3D. The protein is Probable ethylene response sensor 2 (ERS2) of Oryza sativa subsp. japonica (Rice).